A 290-amino-acid chain; its full sequence is 4-diphosphocytidyl-2-C-methyl-D-erythritol kinase (290 aa).

Lysine 8 is a catalytic residue. 89 to 99 (PIGAGVGGGSS) provides a ligand contact to ATP. Aspartate 131 is a catalytic residue.

This sequence belongs to the GHMP kinase family. IspE subfamily.

It carries out the reaction 4-CDP-2-C-methyl-D-erythritol + ATP = 4-CDP-2-C-methyl-D-erythritol 2-phosphate + ADP + H(+). Its pathway is isoprenoid biosynthesis; isopentenyl diphosphate biosynthesis via DXP pathway; isopentenyl diphosphate from 1-deoxy-D-xylulose 5-phosphate: step 3/6. Functionally, catalyzes the phosphorylation of the position 2 hydroxy group of 4-diphosphocytidyl-2C-methyl-D-erythritol. This Chlamydia felis (strain Fe/C-56) (Chlamydophila felis) protein is 4-diphosphocytidyl-2-C-methyl-D-erythritol kinase.